Reading from the N-terminus, the 179-residue chain is Large ribosomal subunit protein uL5 (179 aa).

Belongs to the universal ribosomal protein uL5 family. Part of the 50S ribosomal subunit; part of the 5S rRNA/L5/L18/L25 subcomplex. Contacts the 5S rRNA and the P site tRNA. Forms a bridge to the 30S subunit in the 70S ribosome.

Functionally, this is one of the proteins that bind and probably mediate the attachment of the 5S RNA into the large ribosomal subunit, where it forms part of the central protuberance. In the 70S ribosome it contacts protein S13 of the 30S subunit (bridge B1b), connecting the 2 subunits; this bridge is implicated in subunit movement. Contacts the P site tRNA; the 5S rRNA and some of its associated proteins might help stabilize positioning of ribosome-bound tRNAs. The chain is Large ribosomal subunit protein uL5 from Burkholderia cenocepacia (strain HI2424).